The following is a 267-amino-acid chain: Hydroxyacylglutathione hydrolase (267 aa).

Residues His55, His57, Asp59, His60, His121, Asp138, and His176 each contribute to the Zn(2+) site.

It belongs to the metallo-beta-lactamase superfamily. Glyoxalase II family. Monomer. Zn(2+) serves as cofactor.

It carries out the reaction an S-(2-hydroxyacyl)glutathione + H2O = a 2-hydroxy carboxylate + glutathione + H(+). It participates in secondary metabolite metabolism; methylglyoxal degradation; (R)-lactate from methylglyoxal: step 2/2. Thiolesterase that catalyzes the hydrolysis of S-D-lactoyl-glutathione to form glutathione and D-lactic acid. The chain is Hydroxyacylglutathione hydrolase from Shewanella sp. (strain ANA-3).